Reading from the N-terminus, the 359-residue chain is Outer membrane protein assembly factor BamC (359 aa).

The N-terminal stretch at 1-21 (MSTLNKYKTLIIISSLAAVSS) is a signal peptide. The N-palmitoyl cysteine moiety is linked to residue cysteine 22. Cysteine 22 carries the S-diacylglycerol cysteine lipid modification.

Belongs to the BamC family. Part of the Bam complex.

The protein resides in the cell outer membrane. Its function is as follows. Part of the outer membrane protein assembly complex, which is involved in assembly and insertion of beta-barrel proteins into the outer membrane. The sequence is that of Outer membrane protein assembly factor BamC from Kangiella koreensis (strain DSM 16069 / JCM 12317 / KCTC 12182 / SW-125).